Reading from the N-terminus, the 506-residue chain is Abscisic acid 8'-hydroxylase 2 (506 aa).

A helical membrane pass occupies residues 3–23 (FLLFFVFVTAAVLCFVVPAFL). Position 437 (C437) interacts with heme.

This sequence belongs to the cytochrome P450 family. The cofactor is heme. In internodes and expanding leaves. Weak expression in seedlings.

The protein localises to the membrane. It carries out the reaction 2-cis-(+)-abscisate + reduced [NADPH--hemoprotein reductase] + O2 = (+)-8'-hydroxyabscisate + oxidized [NADPH--hemoprotein reductase] + H2O + H(+). It participates in plant hormone degradation; abscisic acid degradation. In terms of biological role, involved in the oxidative degradation of abscisic acid. The chain is Abscisic acid 8'-hydroxylase 2 (CYP707A6) from Oryza sativa subsp. indica (Rice).